The primary structure comprises 352 residues: Endoplasmic reticulum GDP-fucose transporter (352 aa).

The next 10 membrane-spanning stretches (helical) occupy residues Leu-9–Ile-29, Gly-34–Phe-54, Tyr-70–Phe-90, Leu-96–Leu-116, Ser-126–Val-146, Phe-163–Met-183, Ala-201–Val-221, Leu-249–Leu-271, Ala-276–Tyr-298, and Leu-305–Ile-325. Residues Lys-350–Glu-352 carry the Prevents secretion from ER motif.

It belongs to the nucleotide-sugar transporter family. SLC35B subfamily.

Its subcellular location is the endoplasmic reticulum membrane. Functionally, sugar transporter that specifically mediates the transport of UDP-N-acetylglucosamine (UDP-GlcNAc), GDP-fucose and UDP-xylose. Functions redundantly with Gfr in the O-fucosylation of Notch, positively regulating Notch signaling. Involved in the biosynthesis of heparan sulfate-glycosaminoglycan (HS-GAG) and in Dpp signaling in the wing imaginal disk. The chain is Endoplasmic reticulum GDP-fucose transporter from Drosophila melanogaster (Fruit fly).